Here is a 168-residue protein sequence, read N- to C-terminus: Probable chemoreceptor glutamine deamidase CheD 2 (168 aa).

This sequence belongs to the CheD family.

It catalyses the reaction L-glutaminyl-[protein] + H2O = L-glutamyl-[protein] + NH4(+). In terms of biological role, probably deamidates glutamine residues to glutamate on methyl-accepting chemotaxis receptors (MCPs), playing an important role in chemotaxis. The chain is Probable chemoreceptor glutamine deamidase CheD 2 from Leptospira interrogans serogroup Icterohaemorrhagiae serovar copenhageni (strain Fiocruz L1-130).